The chain runs to 718 residues: Probable GTP diphosphokinase RSH2, chloroplastic (718 aa).

Residues 1–68 (MSVPAIAVYT…LFSSPTAAPR (68 aa)) constitute a chloroplast transit peptide. The tract at residues 9-48 (YTSPPGAVYTSSSSSELEASSRGSAPCATAAPPSPASSHR) is disordered. Residues 19 to 39 (SSSSSELEASSRGSAPCATAA) show a composition bias toward low complexity. Residues 243–347 (YLQHCVETAV…IKLADRLHNM (105 aa)) enclose the HD domain.

It belongs to the RelA/SpoT family.

Its subcellular location is the plastid. The protein localises to the chloroplast. The catalysed reaction is GTP + ATP = guanosine 3'-diphosphate 5'-triphosphate + AMP. In terms of biological role, probable ppGpp (guanosine 3'-diphosphate 5'-diphosphate) synthetase that may be involved in a rapid plant ppGpp-mediated response to pathogens and other stresses. In Oryza sativa subsp. japonica (Rice), this protein is Probable GTP diphosphokinase RSH2, chloroplastic (RSH2).